The primary structure comprises 307 residues: Ribosomal RNA small subunit methyltransferase H (307 aa).

Residues Gly32 to His34, Asp52, Phe78, Asp99, and Gln106 each bind S-adenosyl-L-methionine. The disordered stretch occupies residues Lys287 to Val307.

It belongs to the methyltransferase superfamily. RsmH family.

Its subcellular location is the cytoplasm. It catalyses the reaction cytidine(1402) in 16S rRNA + S-adenosyl-L-methionine = N(4)-methylcytidine(1402) in 16S rRNA + S-adenosyl-L-homocysteine + H(+). Functionally, specifically methylates the N4 position of cytidine in position 1402 (C1402) of 16S rRNA. In Caldicellulosiruptor bescii (strain ATCC BAA-1888 / DSM 6725 / KCTC 15123 / Z-1320) (Anaerocellum thermophilum), this protein is Ribosomal RNA small subunit methyltransferase H.